A 302-amino-acid chain; its full sequence is UDP-N-acetylenolpyruvoylglucosamine reductase (302 aa).

In terms of domain architecture, FAD-binding PCMH-type spans 31-196; it reads KIGGPADVLA…LRAWISLERG (166 aa). R175 is a catalytic residue. The active-site Proton donor is the S225. E295 is an active-site residue.

The protein belongs to the MurB family. The cofactor is FAD.

It localises to the cytoplasm. It carries out the reaction UDP-N-acetyl-alpha-D-muramate + NADP(+) = UDP-N-acetyl-3-O-(1-carboxyvinyl)-alpha-D-glucosamine + NADPH + H(+). Its pathway is cell wall biogenesis; peptidoglycan biosynthesis. Functionally, cell wall formation. The protein is UDP-N-acetylenolpyruvoylglucosamine reductase of Caldanaerobacter subterraneus subsp. tengcongensis (strain DSM 15242 / JCM 11007 / NBRC 100824 / MB4) (Thermoanaerobacter tengcongensis).